The chain runs to 809 residues: Trimethylamine-N-oxide reductase 2 (809 aa).

The segment at residues 1–31 (MTLTRREFIKHSGIAAGTLVVTSAAPLPAWA) is a signal peptide (tat-type signal). S176 serves as a coordination point for Mo-bis(molybdopterin guanine dinucleotide).

This sequence belongs to the prokaryotic molybdopterin-containing oxidoreductase family. Requires Mo-bis(molybdopterin guanine dinucleotide) as cofactor. Post-translationally, predicted to be exported by the Tat system. The position of the signal peptide cleavage has not been experimentally proven.

It is found in the periplasm. The enzyme catalyses trimethylamine + 2 Fe(III)-[cytochrome c] + H2O = trimethylamine N-oxide + 2 Fe(II)-[cytochrome c] + 3 H(+). Reduces trimethylamine-N-oxide (TMAO) into trimethylamine; an anaerobic reaction coupled to energy-yielding reactions. Can also reduce other N- and S-oxide compounds such as 4-methylmorpholine-N-oxide and biotin sulfoxide (BSO), but with a lower catalytic efficiency. The sequence is that of Trimethylamine-N-oxide reductase 2 (torZ) from Escherichia coli O6:H1 (strain CFT073 / ATCC 700928 / UPEC).